A 133-amino-acid polypeptide reads, in one-letter code: Small ribosomal subunit protein uS11 (133 aa).

Residues 1-22 (MPPKTRGAVRKPRKKDKKNIAL) form a disordered region. Residues 7 to 17 (GAVRKPRKKDK) show a composition bias toward basic residues.

It belongs to the universal ribosomal protein uS11 family. In terms of assembly, part of the 30S ribosomal subunit. Interacts with proteins S7 and S18. Binds to IF-3.

Located on the platform of the 30S subunit, it bridges several disparate RNA helices of the 16S rRNA. Forms part of the Shine-Dalgarno cleft in the 70S ribosome. This chain is Small ribosomal subunit protein uS11, found in Renibacterium salmoninarum (strain ATCC 33209 / DSM 20767 / JCM 11484 / NBRC 15589 / NCIMB 2235).